A 395-amino-acid polypeptide reads, in one-letter code: S-adenosylmethionine synthase (395 aa).

His-16 is an ATP binding site. Residue Asp-18 participates in Mg(2+) binding. Glu-44 lines the K(+) pocket. Positions 57 and 100 each coordinate L-methionine. The flexible loop stretch occupies residues 100–110; it reads QSPDIAGGVNL. Residues 175–177, 242–243, Asp-251, 257–258, Ala-274, and Lys-278 contribute to the ATP site; these read DGK, RF, and RK. Residue Asp-251 coordinates L-methionine. Lys-282 is an L-methionine binding site.

It belongs to the AdoMet synthase family. Homotetramer; dimer of dimers. Mg(2+) serves as cofactor. The cofactor is K(+).

Its subcellular location is the cytoplasm. The catalysed reaction is L-methionine + ATP + H2O = S-adenosyl-L-methionine + phosphate + diphosphate. The protein operates within amino-acid biosynthesis; S-adenosyl-L-methionine biosynthesis; S-adenosyl-L-methionine from L-methionine: step 1/1. Functionally, catalyzes the formation of S-adenosylmethionine (AdoMet) from methionine and ATP. The overall synthetic reaction is composed of two sequential steps, AdoMet formation and the subsequent tripolyphosphate hydrolysis which occurs prior to release of AdoMet from the enzyme. The protein is S-adenosylmethionine synthase of Thermus thermophilus (strain ATCC BAA-163 / DSM 7039 / HB27).